A 265-amino-acid polypeptide reads, in one-letter code: Shikimate dehydrogenase (NADP(+)) (265 aa).

Shikimate is bound by residues 15-17 (SLS) and threonine 62. The active-site Proton acceptor is the lysine 66. NADP(+) is bound at residue glutamate 78. Residues asparagine 87 and aspartate 102 each coordinate shikimate. NADP(+)-binding positions include 126–130 (GAGGV), 150–155 (NRTELK), and valine 210. Tyrosine 212 contributes to the shikimate binding site. Residue glycine 233 participates in NADP(+) binding.

This sequence belongs to the shikimate dehydrogenase family. Homodimer.

The catalysed reaction is shikimate + NADP(+) = 3-dehydroshikimate + NADPH + H(+). Its pathway is metabolic intermediate biosynthesis; chorismate biosynthesis; chorismate from D-erythrose 4-phosphate and phosphoenolpyruvate: step 4/7. Functionally, involved in the biosynthesis of the chorismate, which leads to the biosynthesis of aromatic amino acids. Catalyzes the reversible NADPH linked reduction of 3-dehydroshikimate (DHSA) to yield shikimate (SA). In Pelagibacter ubique (strain HTCC1062), this protein is Shikimate dehydrogenase (NADP(+)).